The primary structure comprises 220 residues: Fructose-6-phosphate aldolase (220 aa).

The active-site Schiff-base intermediate with substrate is the Lys-85.

It belongs to the transaldolase family. Type 3A subfamily. Homodecamer.

Its subcellular location is the cytoplasm. The enzyme catalyses beta-D-fructose 6-phosphate = dihydroxyacetone + D-glyceraldehyde 3-phosphate. Functionally, catalyzes the reversible formation of fructose 6-phosphate from dihydroxyacetone and D-glyceraldehyde 3-phosphate via an aldolization reaction. The protein is Fructose-6-phosphate aldolase of Salmonella gallinarum (strain 287/91 / NCTC 13346).